A 156-amino-acid chain; its full sequence is Endoribonuclease YbeY (156 aa).

3 residues coordinate Zn(2+): H122, H126, and H132.

It belongs to the endoribonuclease YbeY family. It depends on Zn(2+) as a cofactor.

It localises to the cytoplasm. Single strand-specific metallo-endoribonuclease involved in late-stage 70S ribosome quality control and in maturation of the 3' terminus of the 16S rRNA. The polypeptide is Endoribonuclease YbeY (Pediococcus pentosaceus (strain ATCC 25745 / CCUG 21536 / LMG 10740 / 183-1w)).